A 124-amino-acid polypeptide reads, in one-letter code: Orexigenic neuropeptide QRFP (124 aa).

An N-terminal signal peptide occupies residues 1-17 (MRGFRPLLSLLLPLSAC). Positions 18-79 (FPLLDRRGPT…REHTGFRLGR (62 aa)) are excised as a propeptide. Residues 63 to 101 (REQQASHREHTGFRLGRQDGSSEAAGFLPADSEKASGPL) are disordered. At Phe-122 the chain carries Phenylalanine amide.

Belongs to the RFamide neuropeptide family. In terms of assembly, ligand for the G-protein coupled receptor QRFPR/GPR103. As to expression, expressed in the brain with highest levels in the periventricular hypothalamic nucleus and lateral hypothalamic areas. Expressed at moderate levels in the adrenal gland, eye, heart, intestine, liver, lung, kidney, mesenteric lymph node, ovary, placenta, Peyer patches, skin, spleen, stomach, testis, thymus and uterus.

It is found in the secreted. Stimulates feeding and grooming behavior, metabolic rate and locomotor activity and increases blood pressure. May have orexigenic activity. May promote aldosterone secretion by the adrenal gland. The sequence is that of Orexigenic neuropeptide QRFP from Mus musculus (Mouse).